The chain runs to 728 residues: 1,4-alpha-glucan branching enzyme GlgB (728 aa).

Aspartate 405 (nucleophile) is an active-site residue. The Proton donor role is filled by glutamate 458.

It belongs to the glycosyl hydrolase 13 family. GlgB subfamily. As to quaternary structure, monomer.

It catalyses the reaction Transfers a segment of a (1-&gt;4)-alpha-D-glucan chain to a primary hydroxy group in a similar glucan chain.. It functions in the pathway glycan biosynthesis; glycogen biosynthesis. Its function is as follows. Catalyzes the formation of the alpha-1,6-glucosidic linkages in glycogen by scission of a 1,4-alpha-linked oligosaccharide from growing alpha-1,4-glucan chains and the subsequent attachment of the oligosaccharide to the alpha-1,6 position. The protein is 1,4-alpha-glucan branching enzyme GlgB of Shigella flexneri.